The chain runs to 336 residues: Fructose-1,6-bisphosphatase class 1 (336 aa).

Positions 90, 112, 114, and 115 each coordinate Mg(2+). Residues aspartate 115–serine 118, asparagine 211, and lysine 277 contribute to the substrate site. Glutamate 283 is a Mg(2+) binding site.

The protein belongs to the FBPase class 1 family. As to quaternary structure, homotetramer. It depends on Mg(2+) as a cofactor.

The protein resides in the cytoplasm. It carries out the reaction beta-D-fructose 1,6-bisphosphate + H2O = beta-D-fructose 6-phosphate + phosphate. It functions in the pathway carbohydrate biosynthesis; gluconeogenesis. The chain is Fructose-1,6-bisphosphatase class 1 from Pseudomonas fluorescens (strain Pf0-1).